The sequence spans 517 residues: Ribonuclease Y (517 aa).

A helical transmembrane segment spans residues 1–21 (MIEVLIGLGAGVVGVGAGYLY). The region spanning 207–273 (LINVVNIKND…TRVIELLVED (67 aa)) is the KH domain. In terms of domain architecture, HD spans 333-426 (ALAHSLEVAH…VCAADALSAA (94 aa)).

Belongs to the RNase Y family.

The protein localises to the cell membrane. In terms of biological role, endoribonuclease that initiates mRNA decay. This is Ribonuclease Y from Campylobacter concisus (strain 13826).